A 236-amino-acid polypeptide reads, in one-letter code: MGQKINPIGLRLGINRTWDSRWFAGKAEYGKLLHEDVKIREILHKELKQAAVARIVIERPHKKCRVTIHSARPGVVIGKKGADIDKLRKRVADITSSDVVINIVEIRKPELDATLVAESIAQQLERRVAFRRAMKRAVQSAMRLGAEGIRINCSGRLGGAEIARMEWYREGRVPLHTLRADIDYGVATAFTTFGTCGVKVWIFKGEILEHDPMAQDKRMNEGGGESSQPRSRRDAA.

Residues 39–107 enclose the KH type-2 domain; it reads IREILHKELK…DVVINIVEIR (69 aa). Residues 213-236 are disordered; sequence MAQDKRMNEGGGESSQPRSRRDAA.

It belongs to the universal ribosomal protein uS3 family. In terms of assembly, part of the 30S ribosomal subunit. Forms a tight complex with proteins S10 and S14.

Its function is as follows. Binds the lower part of the 30S subunit head. Binds mRNA in the 70S ribosome, positioning it for translation. The polypeptide is Small ribosomal subunit protein uS3 (Bradyrhizobium sp. (strain BTAi1 / ATCC BAA-1182)).